A 56-amino-acid chain; its full sequence is Large ribosomal subunit protein bL33c (56 aa).

Belongs to the bacterial ribosomal protein bL33 family.

It is found in the plastid. Its subcellular location is the chloroplast. The sequence is that of Large ribosomal subunit protein bL33c (rpl33) from Guillardia theta (Cryptophyte).